The sequence spans 190 residues: Adenylate kinase (190 aa).

12–17 lines the ATP pocket; it reads GSGKTT. An NMP region spans residues 34–63; sequence STGELLRAEVASGSERGKIIEGFTSKGNLV. Residues threonine 35, arginine 40, 61-63, 88-91, and glutamine 95 contribute to the AMP site; these read NLV and GYPR. An LID region spans residues 130-136; that stretch reads GRARGAD. Arginine 131 is an ATP binding site. AMP-binding residues include arginine 133 and arginine 145. Arginine 173 serves as a coordination point for ATP.

This sequence belongs to the adenylate kinase family. In terms of assembly, monomer.

The protein resides in the cytoplasm. The enzyme catalyses AMP + ATP = 2 ADP. It participates in purine metabolism; AMP biosynthesis via salvage pathway; AMP from ADP: step 1/1. Its function is as follows. Catalyzes the reversible transfer of the terminal phosphate group between ATP and AMP. Plays an important role in cellular energy homeostasis and in adenine nucleotide metabolism. In Wolinella succinogenes (strain ATCC 29543 / DSM 1740 / CCUG 13145 / JCM 31913 / LMG 7466 / NCTC 11488 / FDC 602W) (Vibrio succinogenes), this protein is Adenylate kinase.